A 156-amino-acid chain; its full sequence is Ribosomal RNA large subunit methyltransferase H (156 aa).

S-adenosyl-L-methionine contacts are provided by residues Leu73, Gly104, and 123 to 128; that span reads LSPLTL.

It belongs to the RNA methyltransferase RlmH family. As to quaternary structure, homodimer.

The protein localises to the cytoplasm. The enzyme catalyses pseudouridine(1915) in 23S rRNA + S-adenosyl-L-methionine = N(3)-methylpseudouridine(1915) in 23S rRNA + S-adenosyl-L-homocysteine + H(+). In terms of biological role, specifically methylates the pseudouridine at position 1915 (m3Psi1915) in 23S rRNA. This chain is Ribosomal RNA large subunit methyltransferase H, found in Edwardsiella ictaluri (strain 93-146).